We begin with the raw amino-acid sequence, 237 residues long: Peptidase E (237 aa).

Active-site charge relay system residues include S122, D137, and H159.

This sequence belongs to the peptidase S51 family.

Its subcellular location is the cytoplasm. The enzyme catalyses Dipeptidase E catalyzes the hydrolysis of dipeptides Asp-|-Xaa. It does not act on peptides with N-terminal Glu, Asn or Gln, nor does it cleave isoaspartyl peptides.. In terms of biological role, hydrolyzes dipeptides containing N-terminal aspartate residues. May play a role in allowing the cell to use peptide aspartate to spare carbon otherwise required for the synthesis of the aspartate family of amino acids. This chain is Peptidase E, found in Shewanella baltica (strain OS155 / ATCC BAA-1091).